The following is a 307-amino-acid chain: tRNA pseudouridine synthase B (307 aa).

Aspartate 38 functions as the Nucleophile in the catalytic mechanism.

Belongs to the pseudouridine synthase TruB family. Type 1 subfamily.

It catalyses the reaction uridine(55) in tRNA = pseudouridine(55) in tRNA. Responsible for synthesis of pseudouridine from uracil-55 in the psi GC loop of transfer RNAs. The polypeptide is tRNA pseudouridine synthase B (Bacillus cereus (strain ZK / E33L)).